A 324-amino-acid polypeptide reads, in one-letter code: MQSMNVAQLIEQKICLAIMGPTASGKSGLTMALAKHLPIEIISVDSALIYRGMDIGTAKPTLDEQVAVPHHLIDILDPTESYSAADFVEDVHELVKEIFARGNLPVLAGGTMMYFNALQQGMAKLPSADEAIRAKIHQAWQANPAAVHAQLKQVDPEAAERIHQNDPQRLIRALEVYEMTGKPLTQLQREGQQEGLTEFKLAKVALIPEDRKKLHEQIAVRFHEMLNNGFLKEAEKVFSLDGLSADLPAIRSVGYRQAWLFFAQEYDYDTFVEKSIVATRQLAKRQITWLRKEQDLLVLDPFKTNVDDRVEAVLDYLSALTKNA.

20 to 27 lines the ATP pocket; sequence GPTASGKS. Substrate is bound at residue 22 to 27; sequence TASGKS. 3 interaction with substrate tRNA regions span residues 45–48, 168–172, and 284–291; these read DSAL, QRLIR, and KRQITWLR.

The protein belongs to the IPP transferase family. Monomer. Requires Mg(2+) as cofactor.

The enzyme catalyses adenosine(37) in tRNA + dimethylallyl diphosphate = N(6)-dimethylallyladenosine(37) in tRNA + diphosphate. Functionally, catalyzes the transfer of a dimethylallyl group onto the adenine at position 37 in tRNAs that read codons beginning with uridine, leading to the formation of N6-(dimethylallyl)adenosine (i(6)A). In Hydrogenovibrio crunogenus (strain DSM 25203 / XCL-2) (Thiomicrospira crunogena), this protein is tRNA dimethylallyltransferase.